Reading from the N-terminus, the 268-residue chain is Tryptophan synthase alpha chain (268 aa).

Active-site proton acceptor residues include Glu49 and Asp60.

The protein belongs to the TrpA family. Tetramer of two alpha and two beta chains.

It catalyses the reaction (1S,2R)-1-C-(indol-3-yl)glycerol 3-phosphate + L-serine = D-glyceraldehyde 3-phosphate + L-tryptophan + H2O. The protein operates within amino-acid biosynthesis; L-tryptophan biosynthesis; L-tryptophan from chorismate: step 5/5. In terms of biological role, the alpha subunit is responsible for the aldol cleavage of indoleglycerol phosphate to indole and glyceraldehyde 3-phosphate. This chain is Tryptophan synthase alpha chain, found in Haemophilus influenzae (strain ATCC 51907 / DSM 11121 / KW20 / Rd).